We begin with the raw amino-acid sequence, 116 residues long: Large ribosomal subunit protein bL17 (116 aa).

This sequence belongs to the bacterial ribosomal protein bL17 family. In terms of assembly, part of the 50S ribosomal subunit. Contacts protein L32.

The sequence is that of Large ribosomal subunit protein bL17 from Synechococcus elongatus (strain ATCC 33912 / PCC 7942 / FACHB-805) (Anacystis nidulans R2).